The chain runs to 132 residues: Small ribosomal subunit protein uS9 (132 aa).

This sequence belongs to the universal ribosomal protein uS9 family.

This chain is Small ribosomal subunit protein uS9, found in Baumannia cicadellinicola subsp. Homalodisca coagulata.